We begin with the raw amino-acid sequence, 190 residues long: uncharacterized protein (190 aa).

The protein belongs to the Iojap/RsfS family.

This is an uncharacterized protein from Caenorhabditis elegans.